The chain runs to 103 residues: Co-chaperonin GroES (103 aa).

This sequence belongs to the GroES chaperonin family. As to quaternary structure, heptamer of 7 subunits arranged in a ring. Interacts with the chaperonin GroEL.

It is found in the cytoplasm. Together with the chaperonin GroEL, plays an essential role in assisting protein folding. The GroEL-GroES system forms a nano-cage that allows encapsulation of the non-native substrate proteins and provides a physical environment optimized to promote and accelerate protein folding. GroES binds to the apical surface of the GroEL ring, thereby capping the opening of the GroEL channel. In Prochlorococcus marinus (strain MIT 9313), this protein is Co-chaperonin GroES.